The chain runs to 579 residues: Potassium-transporting ATPase potassium-binding subunit (579 aa).

A run of 10 helical transmembrane segments spans residues 1–21 (MISN…ACVV), 64–84 (HYAL…YGLQ), 135–155 (GLTV…IGLI), 178–198 (IYIL…QGVV), 265–285 (FLEL…FGLM), 293–313 (WAIL…AVSA), 398–418 (GLYG…LMVG), 435–455 (MAAL…AIAV), 503–523 (WLGI…LAIA), and 549–569 (LLIG…LALG).

The protein belongs to the KdpA family. As to quaternary structure, the system is composed of three essential subunits: KdpA, KdpB and KdpC.

The protein localises to the cell membrane. Functionally, part of the high-affinity ATP-driven potassium transport (or Kdp) system, which catalyzes the hydrolysis of ATP coupled with the electrogenic transport of potassium into the cytoplasm. This subunit binds the extracellular potassium ions and delivers the ions to the membrane domain of KdpB through an intramembrane tunnel. In Herpetosiphon aurantiacus (strain ATCC 23779 / DSM 785 / 114-95), this protein is Potassium-transporting ATPase potassium-binding subunit.